Here is a 394-residue protein sequence, read N- to C-terminus: Elongation factor Tu (394 aa).

A tr-type G domain is found at 10-204 (LPHVNIGTIG…AVDEYIPTPT (195 aa)). The tract at residues 19–26 (GHVDHGKT) is G1. 19–26 (GHVDHGKT) contributes to the GTP binding site. Thr-26 contacts Mg(2+). A G2 region spans residues 60 to 64 (GITIN). The tract at residues 81 to 84 (DCPG) is G3. Residues 81–85 (DCPGH) and 136–139 (NKCD) contribute to the GTP site. A G4 region spans residues 136-139 (NKCD). Residues 174–176 (SAL) form a G5 region.

It belongs to the TRAFAC class translation factor GTPase superfamily. Classic translation factor GTPase family. EF-Tu/EF-1A subfamily. As to quaternary structure, monomer.

The protein localises to the cytoplasm. The enzyme catalyses GTP + H2O = GDP + phosphate + H(+). Functionally, GTP hydrolase that promotes the GTP-dependent binding of aminoacyl-tRNA to the A-site of ribosomes during protein biosynthesis. The protein is Elongation factor Tu of Mesoplasma florum (strain ATCC 33453 / NBRC 100688 / NCTC 11704 / L1) (Acholeplasma florum).